The following is a 61-amino-acid chain: Large ribosomal subunit protein uL30 (61 aa).

This sequence belongs to the universal ribosomal protein uL30 family. Part of the 50S ribosomal subunit.

In Francisella philomiragia subsp. philomiragia (strain ATCC 25017 / CCUG 19701 / FSC 153 / O#319-036), this protein is Large ribosomal subunit protein uL30.